Reading from the N-terminus, the 905-residue chain is Protein translocase subunit SecA (905 aa).

Residues glutamine 89, 107–111, and aspartate 502 each bind ATP; that span reads GEGKT. The Zn(2+) site is built by cysteine 889, cysteine 891, cysteine 900, and histidine 901.

The protein belongs to the SecA family. In terms of assembly, monomer and homodimer. Part of the essential Sec protein translocation apparatus which comprises SecA, SecYEG and auxiliary proteins SecDF-YajC and YidC. Requires Zn(2+) as cofactor.

Its subcellular location is the cell inner membrane. The protein localises to the cytoplasm. It carries out the reaction ATP + H2O + cellular proteinSide 1 = ADP + phosphate + cellular proteinSide 2.. Part of the Sec protein translocase complex. Interacts with the SecYEG preprotein conducting channel. Has a central role in coupling the hydrolysis of ATP to the transfer of proteins into and across the cell membrane, serving both as a receptor for the preprotein-SecB complex and as an ATP-driven molecular motor driving the stepwise translocation of polypeptide chains across the membrane. The sequence is that of Protein translocase subunit SecA from Bartonella tribocorum (strain CIP 105476 / IBS 506).